The chain runs to 252 residues: Imidazole glycerol phosphate synthase subunit HisF (252 aa).

Active-site residues include aspartate 11 and aspartate 130.

The protein belongs to the HisA/HisF family. Heterodimer of HisH and HisF.

The protein resides in the cytoplasm. The catalysed reaction is 5-[(5-phospho-1-deoxy-D-ribulos-1-ylimino)methylamino]-1-(5-phospho-beta-D-ribosyl)imidazole-4-carboxamide + L-glutamine = D-erythro-1-(imidazol-4-yl)glycerol 3-phosphate + 5-amino-1-(5-phospho-beta-D-ribosyl)imidazole-4-carboxamide + L-glutamate + H(+). It participates in amino-acid biosynthesis; L-histidine biosynthesis; L-histidine from 5-phospho-alpha-D-ribose 1-diphosphate: step 5/9. Functionally, IGPS catalyzes the conversion of PRFAR and glutamine to IGP, AICAR and glutamate. The HisF subunit catalyzes the cyclization activity that produces IGP and AICAR from PRFAR using the ammonia provided by the HisH subunit. The sequence is that of Imidazole glycerol phosphate synthase subunit HisF from Desulforudis audaxviator (strain MP104C).